Reading from the N-terminus, the 348-residue chain is Phenylalanine--tRNA ligase alpha subunit (348 aa).

Glu259 contacts Mg(2+).

Belongs to the class-II aminoacyl-tRNA synthetase family. Phe-tRNA synthetase alpha subunit type 1 subfamily. In terms of assembly, tetramer of two alpha and two beta subunits. Requires Mg(2+) as cofactor.

The protein localises to the cytoplasm. The enzyme catalyses tRNA(Phe) + L-phenylalanine + ATP = L-phenylalanyl-tRNA(Phe) + AMP + diphosphate + H(+). The polypeptide is Phenylalanine--tRNA ligase alpha subunit (Lacticaseibacillus paracasei (strain ATCC 334 / BCRC 17002 / CCUG 31169 / CIP 107868 / KCTC 3260 / NRRL B-441) (Lactobacillus paracasei)).